We begin with the raw amino-acid sequence, 84 residues long: U-scoloptoxin(10)-Er1a (84 aa).

A signal peptide spans 1 to 24 (MSRFCLLFVAFGFVLYFLHMEVTG).

It belongs to the scoloptoxin-10 family. Post-translationally, contains 3 disulfide bonds. As to expression, expressed by the venom gland.

It localises to the secreted. The protein is U-scoloptoxin(10)-Er1a of Ethmostigmus rubripes (Giant centipede).